The chain runs to 339 residues: Anthranilate phosphoribosyltransferase (339 aa).

5-phospho-alpha-D-ribose 1-diphosphate-binding positions include glycine 80, glycine 83–aspartate 84, threonine 88, asparagine 90–threonine 93, lysine 108–serine 116, and serine 120. Glycine 80 serves as a coordination point for anthranilate. Serine 92 is a Mg(2+) binding site. Asparagine 111 contacts anthranilate. An anthranilate-binding site is contributed by arginine 166. 2 residues coordinate Mg(2+): aspartate 225 and glutamate 226.

This sequence belongs to the anthranilate phosphoribosyltransferase family. Homodimer. The cofactor is Mg(2+).

It carries out the reaction N-(5-phospho-beta-D-ribosyl)anthranilate + diphosphate = 5-phospho-alpha-D-ribose 1-diphosphate + anthranilate. It participates in amino-acid biosynthesis; L-tryptophan biosynthesis; L-tryptophan from chorismate: step 2/5. In terms of biological role, catalyzes the transfer of the phosphoribosyl group of 5-phosphorylribose-1-pyrophosphate (PRPP) to anthranilate to yield N-(5'-phosphoribosyl)-anthranilate (PRA). The chain is Anthranilate phosphoribosyltransferase from Chloroflexus aurantiacus (strain ATCC 29366 / DSM 635 / J-10-fl).